The following is a 192-amino-acid chain: Xanthine phosphoribosyltransferase (192 aa).

2 residues coordinate xanthine: leucine 20 and asparagine 27. 128-132 provides a ligand contact to 5-phospho-alpha-D-ribose 1-diphosphate; it reads ANGDA. Lysine 156 serves as a coordination point for xanthine.

This sequence belongs to the purine/pyrimidine phosphoribosyltransferase family. Xpt subfamily. Homodimer.

Its subcellular location is the cytoplasm. The enzyme catalyses XMP + diphosphate = xanthine + 5-phospho-alpha-D-ribose 1-diphosphate. The protein operates within purine metabolism; XMP biosynthesis via salvage pathway; XMP from xanthine: step 1/1. Converts the preformed base xanthine, a product of nucleic acid breakdown, to xanthosine 5'-monophosphate (XMP), so it can be reused for RNA or DNA synthesis. This chain is Xanthine phosphoribosyltransferase, found in Staphylococcus epidermidis (strain ATCC 35984 / DSM 28319 / BCRC 17069 / CCUG 31568 / BM 3577 / RP62A).